A 223-amino-acid chain; its full sequence is Ribose-5-phosphate isomerase A (223 aa).

Residues 26–29, 82–85, and 95–98 each bind substrate; these read TGST, DGAD, and KGGG. The active-site Proton acceptor is Glu-104. Lys-122 is a substrate binding site.

This sequence belongs to the ribose 5-phosphate isomerase family. In terms of assembly, homodimer.

The catalysed reaction is aldehydo-D-ribose 5-phosphate = D-ribulose 5-phosphate. It functions in the pathway carbohydrate degradation; pentose phosphate pathway; D-ribose 5-phosphate from D-ribulose 5-phosphate (non-oxidative stage): step 1/1. Its function is as follows. Catalyzes the reversible conversion of ribose-5-phosphate to ribulose 5-phosphate. The chain is Ribose-5-phosphate isomerase A from Streptococcus agalactiae serotype Ia (strain ATCC 27591 / A909 / CDC SS700).